The following is a 360-amino-acid chain: 45 kDa calcium-binding protein (360 aa).

The signal sequence occupies residues 1 to 29 (MVSKQAFLFSLGSLYLSLLFIFLLMDVYA). A glycan (N-linked (GlcNAc...) asparagine) is linked at Asn33. EF-hand domains are found at residues 96–131 (RNRR…KTEE), 135–170 (EAVN…SKGF), 231–266 (MLKF…TVEN), 276–311 (WVRD…MNEY), and 312–347 (NALN…FTGS). Ca(2+)-binding residues include Asp109, Asn111, Asp113, Gln115, Glu120, Asp148, Asp150, Asp152, His154, Glu159, Asp244, Asp246, Asp248, Lys250, Glu255, Asp289, Asn291, Asp293, Glu300, Asp325, Asn327, Asp329, and Glu336.

The protein belongs to the CREC family.

It is found in the golgi apparatus lumen. Its function is as follows. May regulate calcium-dependent activities in the endoplasmic reticulum lumen or post-ER compartment. The sequence is that of 45 kDa calcium-binding protein (sdf4) from Xenopus laevis (African clawed frog).